The sequence spans 774 residues: Probable E3 ubiquitin-protein ligase HECTD2 (774 aa).

Residues 1-51 (MSEAARDLSPGAPPAVAAAAPEERKGKEPEREKLPPIVTAGAAAGLDRGSK) form a disordered region. At S9 the chain carries Phosphoserine. Residues 21–34 (PEERKGKEPEREKL) are compositionally biased toward basic and acidic residues. In terms of domain architecture, HECT spans 435–774 (KRADLKKKLK…ISNSEGFGLE (340 aa)). C742 serves as the catalytic Glycyl thioester intermediate.

It catalyses the reaction S-ubiquitinyl-[E2 ubiquitin-conjugating enzyme]-L-cysteine + [acceptor protein]-L-lysine = [E2 ubiquitin-conjugating enzyme]-L-cysteine + N(6)-ubiquitinyl-[acceptor protein]-L-lysine.. It functions in the pathway protein modification; protein ubiquitination. Its function is as follows. E3 ubiquitin-protein ligase which accepts ubiquitin from an E2 ubiquitin-conjugating enzyme in the form of a thioester and then directly transfers the ubiquitin to targeted substrates. This chain is Probable E3 ubiquitin-protein ligase HECTD2 (Hectd2), found in Mus musculus (Mouse).